A 326-amino-acid chain; its full sequence is Tagatose 1,6-diphosphate aldolase (326 aa).

The protein belongs to the aldolase LacD family.

It catalyses the reaction D-tagatofuranose 1,6-bisphosphate = D-glyceraldehyde 3-phosphate + dihydroxyacetone phosphate. The protein operates within carbohydrate metabolism; D-tagatose 6-phosphate degradation; D-glyceraldehyde 3-phosphate and glycerone phosphate from D-tagatose 6-phosphate: step 2/2. This is Tagatose 1,6-diphosphate aldolase from Staphylococcus aureus (strain MSSA476).